We begin with the raw amino-acid sequence, 79 residues long: Translational regulator CsrA (79 aa).

This sequence belongs to the CsrA/RsmA family. As to quaternary structure, homodimer; the beta-strands of each monomer intercalate to form a hydrophobic core, while the alpha-helices form wings that extend away from the core.

The protein resides in the cytoplasm. In terms of biological role, a translational regulator that binds mRNA to regulate translation initiation and/or mRNA stability. Usually binds in the 5'-UTR at or near the Shine-Dalgarno sequence preventing ribosome-binding, thus repressing translation. Its main target seems to be the major flagellin gene, while its function is anatagonized by FliW. The sequence is that of Translational regulator CsrA from Geotalea uraniireducens (strain Rf4) (Geobacter uraniireducens).